A 189-amino-acid chain; its full sequence is Transcription factor FapR (189 aa).

The protein belongs to the FapR family.

Transcriptional factor involved in regulation of membrane lipid biosynthesis by repressing genes involved in fatty acid and phospholipid metabolism. This is Transcription factor FapR from Listeria monocytogenes serotype 4b (strain CLIP80459).